Consider the following 293-residue polypeptide: 4-diphosphocytidyl-2-C-methyl-D-erythritol kinase (293 aa).

Lys16 is an active-site residue. 99–109 contacts ATP; it reads PMGAGLGGGSS. Residue Asp141 is part of the active site.

Belongs to the GHMP kinase family. IspE subfamily.

It catalyses the reaction 4-CDP-2-C-methyl-D-erythritol + ATP = 4-CDP-2-C-methyl-D-erythritol 2-phosphate + ADP + H(+). The protein operates within isoprenoid biosynthesis; isopentenyl diphosphate biosynthesis via DXP pathway; isopentenyl diphosphate from 1-deoxy-D-xylulose 5-phosphate: step 3/6. Functionally, catalyzes the phosphorylation of the position 2 hydroxy group of 4-diphosphocytidyl-2C-methyl-D-erythritol. This chain is 4-diphosphocytidyl-2-C-methyl-D-erythritol kinase, found in Burkholderia orbicola (strain MC0-3).